The primary structure comprises 55 residues: Sec-independent protein translocase protein TatA (55 aa).

The helical transmembrane segment at 1–21 threads the bilayer; sequence MSLGPWQLFLVLIIILVLFGA.

This sequence belongs to the TatA/E family. The Tat system comprises two distinct complexes: a TatABC complex, containing multiple copies of TatA, TatB and TatC subunits, and a separate TatA complex, containing only TatA subunits. Substrates initially bind to the TatABC complex, which probably triggers association of the separate TatA complex to form the active translocon.

The protein localises to the cell membrane. Part of the twin-arginine translocation (Tat) system that transports large folded proteins containing a characteristic twin-arginine motif in their signal peptide across membranes. TatA could form the protein-conducting channel of the Tat system. In Wolbachia pipientis wMel, this protein is Sec-independent protein translocase protein TatA.